The following is a 245-amino-acid chain: uncharacterized protein (245 aa).

The signal sequence occupies residues 1-20 (MIKQTIVALLLSVGASSVFA).

The protein to E.coli YmcB.

This is an uncharacterized protein from Escherichia coli (strain K12).